The chain runs to 553 residues: Hydroxylamine reductase (553 aa).

[2Fe-2S] cluster-binding residues include Cys-3, Cys-6, Cys-18, and Cys-25. Hybrid [4Fe-2O-2S] cluster-binding residues include His-252, Glu-276, Cys-320, Cys-408, Cys-436, Cys-461, Glu-495, and Lys-497. Residue Cys-408 is modified to Cysteine persulfide.

It belongs to the HCP family. The cofactor is [2Fe-2S] cluster. It depends on hybrid [4Fe-2O-2S] cluster as a cofactor.

The protein resides in the cytoplasm. It catalyses the reaction A + NH4(+) + H2O = hydroxylamine + AH2 + H(+). Its function is as follows. Catalyzes the reduction of hydroxylamine to form NH(3) and H(2)O. This is Hydroxylamine reductase from Tolumonas auensis (strain DSM 9187 / NBRC 110442 / TA 4).